The chain runs to 427 residues: Peptidase B (427 aa).

Mn(2+) contacts are provided by Lys-195 and Asp-200. Lys-207 is a catalytic residue. Mn(2+) is bound by residues Asp-218, Asp-277, and Glu-279. Arg-281 is a catalytic residue.

The protein belongs to the peptidase M17 family. As to quaternary structure, homohexamer. Mn(2+) serves as cofactor.

It localises to the cytoplasm. It catalyses the reaction Release of an N-terminal amino acid, Xaa, from a peptide or arylamide. Xaa is preferably Glu or Asp but may be other amino acids, including Leu, Met, His, Cys and Gln.. Its function is as follows. Probably plays an important role in intracellular peptide degradation. The sequence is that of Peptidase B from Escherichia coli O139:H28 (strain E24377A / ETEC).